We begin with the raw amino-acid sequence, 206 residues long: Ras-related protein RABG3c (206 aa).

Position 15-22 (15-22 (GDSGVGKT)) interacts with GTP. The Effector region motif lies at 37 to 45 (YKATIGADF). GTP contacts are provided by residues 63–67 (DTAGQ), 125–128 (NKTD), and 158–159 (SA). 2 S-geranylgeranyl cysteine lipidation sites follow: Cys-204 and Cys-206. A Cysteine methyl ester modification is found at Cys-206.

Belongs to the small GTPase superfamily. Rab family.

The protein resides in the cell membrane. Intracellular vesicle trafficking and protein transport. The sequence is that of Ras-related protein RABG3c (RABG3C) from Arabidopsis thaliana (Mouse-ear cress).